The following is a 150-amino-acid chain: Transcriptional repressor NrdR (150 aa).

A zinc finger spans residues 3–34 (CPFCAHPDSKVVDSRPDKGGAAIRRRRECESC). Positions 49-139 (PLVLKKDGRR…VYRSFKDVNE (91 aa)) constitute an ATP-cone domain.

Belongs to the NrdR family. The cofactor is Zn(2+).

In terms of biological role, negatively regulates transcription of bacterial ribonucleotide reductase nrd genes and operons by binding to NrdR-boxes. The polypeptide is Transcriptional repressor NrdR (Geobacter metallireducens (strain ATCC 53774 / DSM 7210 / GS-15)).